Reading from the N-terminus, the 206-residue chain is Protein-methionine-sulfoxide reductase heme-binding subunit MsrQ (206 aa).

The next 6 membrane-spanning stretches (helical) occupy residues 10–30 (VFIAAAVWPLFWLYEAWSAVL), 42–62 (LGLGTLILLLITLAMTPLQKL), 75–95 (LGLWCFAYVVLHLAAYCVFVL), 110–130 (PYIIVGALGFLLLLVLAVTSN), 147–167 (LVYVVLGLGLLHMLWIVRADL), and 169–189 (EWAIYASIGALLLVLRIPPVM).

The protein belongs to the MsrQ family. Heterodimer of a catalytic subunit (MsrP) and a heme-binding subunit (MsrQ). FMN serves as cofactor. Heme b is required as a cofactor.

The protein resides in the cell inner membrane. Its function is as follows. Part of the MsrPQ system that repairs oxidized periplasmic proteins containing methionine sulfoxide residues (Met-O), using respiratory chain electrons. Thus protects these proteins from oxidative-stress damage caused by reactive species of oxygen and chlorine generated by the host defense mechanisms. MsrPQ is essential for the maintenance of envelope integrity under bleach stress, rescuing a wide series of structurally unrelated periplasmic proteins from methionine oxidation. MsrQ provides electrons for reduction to the reductase catalytic subunit MsrP, using the quinone pool of the respiratory chain. In Pseudomonas fluorescens (strain SBW25), this protein is Protein-methionine-sulfoxide reductase heme-binding subunit MsrQ.